A 115-amino-acid chain; its full sequence is NADH-ubiquinone oxidoreductase chain 3 (115 aa).

3 helical membrane-spanning segments follow: residues 3–23 (IMLT…IAFW), 55–75 (FFLV…LLPL), and 86–106 (TMLT…AYEW).

The protein belongs to the complex I subunit 3 family. As to quaternary structure, core subunit of respiratory chain NADH dehydrogenase (Complex I) which is composed of 45 different subunits. Interacts with TMEM186. Interacts with TMEM242.

The protein resides in the mitochondrion inner membrane. The catalysed reaction is a ubiquinone + NADH + 5 H(+)(in) = a ubiquinol + NAD(+) + 4 H(+)(out). Core subunit of the mitochondrial membrane respiratory chain NADH dehydrogenase (Complex I) which catalyzes electron transfer from NADH through the respiratory chain, using ubiquinone as an electron acceptor. Essential for the catalytic activity of complex I. The chain is NADH-ubiquinone oxidoreductase chain 3 from Sus scrofa (Pig).